Reading from the N-terminus, the 176-residue chain is NAD(P)H-quinone oxidoreductase subunit 6, chloroplastic (176 aa).

5 helical membrane-spanning segments follow: residues 10–30 (FLLV…VLLT), 32–52 (PIYS…FYIL), 61–81 (AQLL…VMFM), 95–115 (VGSG…ITII), and 152–172 (FFLP…GAIA).

The protein belongs to the complex I subunit 6 family. In terms of assembly, NDH is composed of at least 16 different subunits, 5 of which are encoded in the nucleus.

The protein resides in the plastid. The protein localises to the chloroplast thylakoid membrane. It carries out the reaction a plastoquinone + NADH + (n+1) H(+)(in) = a plastoquinol + NAD(+) + n H(+)(out). It catalyses the reaction a plastoquinone + NADPH + (n+1) H(+)(in) = a plastoquinol + NADP(+) + n H(+)(out). In terms of biological role, NDH shuttles electrons from NAD(P)H:plastoquinone, via FMN and iron-sulfur (Fe-S) centers, to quinones in the photosynthetic chain and possibly in a chloroplast respiratory chain. The immediate electron acceptor for the enzyme in this species is believed to be plastoquinone. Couples the redox reaction to proton translocation, and thus conserves the redox energy in a proton gradient. The chain is NAD(P)H-quinone oxidoreductase subunit 6, chloroplastic (ndhG) from Manihot esculenta (Cassava).